The chain runs to 949 residues: Isoleucine--tRNA ligase (949 aa).

The short motif at 58 to 68 is the 'HIGH' region element; sequence PYANGDIHIGH. Position 567 (glutamate 567) interacts with L-isoleucyl-5'-AMP. Positions 608-612 match the 'KMSKS' region motif; sequence KMSKS. Lysine 611 provides a ligand contact to ATP. 4 residues coordinate Zn(2+): cysteine 912, cysteine 915, cysteine 932, and cysteine 935.

The protein belongs to the class-I aminoacyl-tRNA synthetase family. IleS type 1 subfamily. Monomer. Zn(2+) is required as a cofactor.

It is found in the cytoplasm. The catalysed reaction is tRNA(Ile) + L-isoleucine + ATP = L-isoleucyl-tRNA(Ile) + AMP + diphosphate. In terms of biological role, catalyzes the attachment of isoleucine to tRNA(Ile). As IleRS can inadvertently accommodate and process structurally similar amino acids such as valine, to avoid such errors it has two additional distinct tRNA(Ile)-dependent editing activities. One activity is designated as 'pretransfer' editing and involves the hydrolysis of activated Val-AMP. The other activity is designated 'posttransfer' editing and involves deacylation of mischarged Val-tRNA(Ile). In Vibrio cholerae serotype O1 (strain ATCC 39541 / Classical Ogawa 395 / O395), this protein is Isoleucine--tRNA ligase.